Reading from the N-terminus, the 292-residue chain is ATP synthase gamma chain (292 aa).

The protein belongs to the ATPase gamma chain family. In terms of assembly, F-type ATPases have 2 components, CF(1) - the catalytic core - and CF(0) - the membrane proton channel. CF(1) has five subunits: alpha(3), beta(3), gamma(1), delta(1), epsilon(1). CF(0) has three main subunits: a, b and c.

Its subcellular location is the cell inner membrane. Produces ATP from ADP in the presence of a proton gradient across the membrane. The gamma chain is believed to be important in regulating ATPase activity and the flow of protons through the CF(0) complex. This Syntrophobacter fumaroxidans (strain DSM 10017 / MPOB) protein is ATP synthase gamma chain.